A 504-amino-acid polypeptide reads, in one-letter code: ADP,ATP carrier protein 3 (504 aa).

The next 12 helical transmembrane spans lie at 23-43, 59-79, 90-110, 146-166, 183-203, 230-250, 296-316, 329-349, 364-384, 386-406, 449-469, and 473-493; these read LKLF…FGAL, IISF…TILY, YVFY…AYII, YGLM…LMFW, PVLG…LVFF, EMLQ…MLLF, IALL…PWKA, VHFM…FMII, LLTP…IIFI, EIGS…VGAI, FGKS…PTAT, and IIIY…WDVV.

Belongs to the ADP/ATP translocase tlc family.

It localises to the cell membrane. Functionally, provides the rickettsial cell with host ATP in exchange for rickettsial ADP. This is an obligate exchange system. This energy acquiring activity is an important component of rickettsial parasitism. The sequence is that of ADP,ATP carrier protein 3 (tlcC) from Rickettsia bellii (strain RML369-C).